The chain runs to 119 residues: Ribonuclease P protein component (119 aa).

Belongs to the RnpA family. Consists of a catalytic RNA component (M1 or rnpB) and a protein subunit.

The enzyme catalyses Endonucleolytic cleavage of RNA, removing 5'-extranucleotides from tRNA precursor.. RNaseP catalyzes the removal of the 5'-leader sequence from pre-tRNA to produce the mature 5'-terminus. It can also cleave other RNA substrates such as 4.5S RNA. The protein component plays an auxiliary but essential role in vivo by binding to the 5'-leader sequence and broadening the substrate specificity of the ribozyme. This is Ribonuclease P protein component from Citrobacter koseri (strain ATCC BAA-895 / CDC 4225-83 / SGSC4696).